The chain runs to 476 residues: Proline--tRNA ligase (476 aa).

Belongs to the class-II aminoacyl-tRNA synthetase family. ProS type 3 subfamily. Homodimer.

It localises to the cytoplasm. The catalysed reaction is tRNA(Pro) + L-proline + ATP = L-prolyl-tRNA(Pro) + AMP + diphosphate. Its function is as follows. Catalyzes the attachment of proline to tRNA(Pro) in a two-step reaction: proline is first activated by ATP to form Pro-AMP and then transferred to the acceptor end of tRNA(Pro). The sequence is that of Proline--tRNA ligase from Cenarchaeum symbiosum (strain A).